The chain runs to 178 residues: uncharacterized protein (178 aa).

The span at 1–13 (MEVASSSSACQFD) shows a compositional bias: polar residues. Disordered stretches follow at residues 1 to 24 (MEVA…ELKP) and 47 to 114 (WPSR…KKEK).

This is an uncharacterized protein from Caenorhabditis elegans.